The chain runs to 907 residues: Protein translocase subunit SecA (907 aa).

ATP contacts are provided by residues glutamine 87, 105–109 (GEGKT), and aspartate 512. Residues 834 to 907 (QEDVERMEEQ…KKYKQCHGKI (74 aa)) are disordered. Composition is skewed to basic and acidic residues over residues 836 to 853 (DVER…EAAR) and 873 to 888 (EEAH…KVGR). Cysteine 892, cysteine 894, cysteine 903, and histidine 904 together coordinate Zn(2+). Basic residues predominate over residues 898–907 (KKYKQCHGKI).

The protein belongs to the SecA family. As to quaternary structure, monomer and homodimer. Part of the essential Sec protein translocation apparatus which comprises SecA, SecYEG and auxiliary proteins SecDF-YajC and YidC. Zn(2+) is required as a cofactor.

The protein localises to the cell inner membrane. It is found in the cytoplasm. It catalyses the reaction ATP + H2O + cellular proteinSide 1 = ADP + phosphate + cellular proteinSide 2.. Part of the Sec protein translocase complex. Interacts with the SecYEG preprotein conducting channel. Has a central role in coupling the hydrolysis of ATP to the transfer of proteins into and across the cell membrane, serving both as a receptor for the preprotein-SecB complex and as an ATP-driven molecular motor driving the stepwise translocation of polypeptide chains across the membrane. The protein is Protein translocase subunit SecA of Aliivibrio fischeri (strain MJ11) (Vibrio fischeri).